The following is a 195-amino-acid chain: 3-isopropylmalate dehydratase small subunit (195 aa).

This sequence belongs to the LeuD family. LeuD type 1 subfamily. Heterodimer of LeuC and LeuD.

It catalyses the reaction (2R,3S)-3-isopropylmalate = (2S)-2-isopropylmalate. The protein operates within amino-acid biosynthesis; L-leucine biosynthesis; L-leucine from 3-methyl-2-oxobutanoate: step 2/4. Functionally, catalyzes the isomerization between 2-isopropylmalate and 3-isopropylmalate, via the formation of 2-isopropylmaleate. This Oenococcus oeni (strain ATCC BAA-331 / PSU-1) protein is 3-isopropylmalate dehydratase small subunit.